Here is a 402-residue protein sequence, read N- to C-terminus: MSSSPEAETMECGISSSKVHDSKTNTTYGIIHNSINGTDTTLFDTFPDSTDNAEVTGDVDDVKTESSPESQSEDLSPFGNDGNESPETVTDIDAVSAVRMQYNIVSSLSPGSEGYIYVCTKRGDNTKRKVIVKAVTGGKTLGSEIDILKKMSHRSIIRLVHAYRWKSTVCMVMPKYKCDLFTYIDIMGPLPLNQIITIERGLLGALAYIHEKGIIHRDVKTENIFLDKPENVVLGDFGAACKLDEHTDKPKCYGWSGTLETNSPELLALDPYCTKTDIWSAGLVLFEMSVKNITFFGKQVNGSGSQLRSIIRCLQVHPLEFPQNNSTNLCKHFKQYAIQLRHPYAIPQIIRKSGMTMDLEYAIAKMLTFDQEFRPSAQDILMLPLFTKEPADALYTITAAHM.

2 disordered regions span residues 1-21 (MSSSPEAETMECGISSSKVHD) and 46-88 (FPDS…SPET). The Protein kinase domain maps to 102–386 (YNIVSSLSPG…AQDILMLPLF (285 aa)). ATP contacts are provided by residues 108–116 (LSPGSEGYI) and K129. D218 acts as the Proton acceptor in catalysis.

The protein belongs to the protein kinase superfamily. Ser/Thr protein kinase family. Phosphorylated by UL13 homolog; this phosphorylation regulates subsequent phosphorylation of UL31 and UL34 homologs by US3. Autophosphorylated.

It is found in the host cytoplasm. The protein localises to the host nucleus. The enzyme catalyses L-seryl-[protein] + ATP = O-phospho-L-seryl-[protein] + ADP + H(+). It carries out the reaction L-threonyl-[protein] + ATP = O-phospho-L-threonyl-[protein] + ADP + H(+). Functionally, multifunctional serine/threonine kinase that plays a role in several processes including egress of virus particles from the nucleus, modulation of the actin cytoskeleton and inhibition of apoptosis. Phosphorylates UL31 and UL34 homologs, two critical regulators of capsid budding from nucleus to endoplasmic reticulum, thereby facilitating virion egress. Modulates and redistributes host components of the nuclear envelope, including LMNA, emerin/EMD and the nuclear matrix protein MATR3. Phosphorylates envelope glycoprotein B (gB), probably to direct it to the cell surface. Promotes virus intracellular spread by restructuring host cell cytoskeleton. Blocks host apoptosis to extend cell survival and allow efficient viral replication. Promotes viral gene expression by phosphorylating host HDAC2 to reduce viral genome silencing. The protein is Protein kinase US3 homolog (MDV092) of Gallus gallus (Chicken).